We begin with the raw amino-acid sequence, 552 residues long: E3 ubiquitin-protein ligase MGRN1 (552 aa).

The N-myristoyl glycine moiety is linked to residue G2. The RING-type zinc finger occupies 278-317 (CVVCLSDLRDTLILPCRHLCLCTSCADTLRYQANNCPICR). The interval 355-384 (SCPFKKSKPHPASLASKKPKRETNSDSVPP) is disordered. A Required for TSG101-binding motif is present at residues 406 to 409 (PSAP). Phosphotyrosine is present on Y411. Residues 439 to 552 (SSRQKGRPQS…PDSCSVGIDE (114 aa)) form a disordered region. Positions 450-460 (APDSTLRSPSS) are enriched in polar residues. The span at 464–475 (EEDEEKLSEDVD) shows a compositional bias: acidic residues. S471 carries the phosphoserine modification. A compositionally biased stretch (polar residues) spans 504 to 523 (SSSPQQGTRAASIENVLQDS). S524 carries the post-translational modification Phosphoserine.

In terms of assembly, interacts with MC1R and MC4R, but not with TBXA2R. Interacts with TSG101. Interacts with mislocalized cytosolically exposed PRNP; this interaction alters MGRN1 subcellular location and causes lysosomal enlargement. Post-translationally, autoubiquitinated in vitro.

Its subcellular location is the early endosome. The protein localises to the cytoplasm. The protein resides in the cytosol. It localises to the nucleus. It is found in the cell membrane. The catalysed reaction is S-ubiquitinyl-[E2 ubiquitin-conjugating enzyme]-L-cysteine + [acceptor protein]-L-lysine = [E2 ubiquitin-conjugating enzyme]-L-cysteine + N(6)-ubiquitinyl-[acceptor protein]-L-lysine.. The protein operates within protein modification; protein ubiquitination. Its function is as follows. E3 ubiquitin-protein ligase. Mediates monoubiquitination at multiple sites of TSG101 in the presence of UBE2D1, but not of UBE2G1, nor UBE2H. Plays a role in the regulation of endosome-to-lysosome trafficking. Impairs MC1R- and MC4R-signaling by competing with GNAS-binding to MCRs and inhibiting agonist-induced cAMP production. Does not inhibit ADRB2-signaling. Does not promote MC1R ubiquitination. Acts also as a negative regulator of hedgehog signaling. The polypeptide is E3 ubiquitin-protein ligase MGRN1 (MGRN1) (Homo sapiens (Human)).